The chain runs to 1182 residues: DNA-directed RNA polymerase subunit beta (1182 aa).

Belongs to the RNA polymerase beta chain family. In terms of assembly, the RNAP catalytic core consists of 2 alpha, 1 beta, 1 beta' and 1 omega subunit. When a sigma factor is associated with the core the holoenzyme is formed, which can initiate transcription.

The catalysed reaction is RNA(n) + a ribonucleoside 5'-triphosphate = RNA(n+1) + diphosphate. DNA-dependent RNA polymerase catalyzes the transcription of DNA into RNA using the four ribonucleoside triphosphates as substrates. The sequence is that of DNA-directed RNA polymerase subunit beta from Fervidobacterium nodosum (strain ATCC 35602 / DSM 5306 / Rt17-B1).